The sequence spans 206 residues: Ribosomal RNA large subunit methyltransferase E (206 aa).

5 residues coordinate S-adenosyl-L-methionine: glycine 63, tryptophan 65, aspartate 83, aspartate 99, and aspartate 124. Lysine 164 serves as the catalytic Proton acceptor.

The protein belongs to the class I-like SAM-binding methyltransferase superfamily. RNA methyltransferase RlmE family.

The protein localises to the cytoplasm. The catalysed reaction is uridine(2552) in 23S rRNA + S-adenosyl-L-methionine = 2'-O-methyluridine(2552) in 23S rRNA + S-adenosyl-L-homocysteine + H(+). Functionally, specifically methylates the uridine in position 2552 of 23S rRNA at the 2'-O position of the ribose in the fully assembled 50S ribosomal subunit. This chain is Ribosomal RNA large subunit methyltransferase E, found in Buchnera aphidicola subsp. Schizaphis graminum (strain Sg).